Consider the following 402-residue polypeptide: Putative neuropeptide Y receptor 11 (402 aa).

The Extracellular portion of the chain corresponds to 1–45 (MGSVNESCDNYVEIFNKINYFFRDDQVINGTEYSPKEFGYFITFA). Residues Asn-5 and Asn-29 are each glycosylated (N-linked (GlcNAc...) asparagine). Residues 46-66 (YMLIILFGAIGNFLTIIVVIL) form a helical membrane-spanning segment. Residues 67–85 (NPAMRTTRNFFILNLALSD) lie on the Cytoplasmic side of the membrane. A helical membrane pass occupies residues 86–106 (FFVCIVTAPTTLYTVLYMFWP). Over 107-122 (FSRTLCKIAGSLQGFN) the chain is Extracellular. A disulfide bridge connects residues Cys-112 and Cys-194. Residues 123–143 (IFLSTFSIASIAVDRYVLIIF) traverse the membrane as a helical segment. Topologically, residues 144–152 (PTKRERQQN) are cytoplasmic. A helical membrane pass occupies residues 153–173 (LSFCFFIMIWVISLILAVPLL). Over 174 to 210 (QASDLTPVFVEPSCDLALYICHEQNEIWEKMIISKGT) the chain is Extracellular. A helical membrane pass occupies residues 211–231 (YTLAVLITQYAFPLFSLVFAY). At 232 to 272 (SRIAHRMKLRFANRNQNVTTNTNTSQRRRSVVERQRRTHLL) the chain is on the cytoplasmic side. The chain crosses the membrane as a helical span at residues 273–293 (LVCVVAVFAVAWLPLNVFHIF). Residues 294–306 (NTFELVNSFSVTT) are Extracellular-facing. A helical membrane pass occupies residues 307–328 (FSICHCLAMCSACLNPLIYAFF). Residues 329–402 (NHNFRIEFMH…LSAMEQDEQL (74 aa)) are Cytoplasmic-facing.

It belongs to the G-protein coupled receptor 1 family.

It is found in the cell membrane. Its function is as follows. Could be a receptor for neuropeptide Y and peptide YY. This Caenorhabditis elegans protein is Putative neuropeptide Y receptor 11 (npr-11).